A 251-amino-acid chain; its full sequence is 3-deoxy-manno-octulosonate cytidylyltransferase (251 aa).

It belongs to the KdsB family.

The protein localises to the cytoplasm. It catalyses the reaction 3-deoxy-alpha-D-manno-oct-2-ulosonate + CTP = CMP-3-deoxy-beta-D-manno-octulosonate + diphosphate. Its pathway is nucleotide-sugar biosynthesis; CMP-3-deoxy-D-manno-octulosonate biosynthesis; CMP-3-deoxy-D-manno-octulosonate from 3-deoxy-D-manno-octulosonate and CTP: step 1/1. It functions in the pathway bacterial outer membrane biogenesis; lipopolysaccharide biosynthesis. Activates KDO (a required 8-carbon sugar) for incorporation into bacterial lipopolysaccharide in Gram-negative bacteria. The polypeptide is 3-deoxy-manno-octulosonate cytidylyltransferase (Sodalis glossinidius (strain morsitans)).